The chain runs to 529 residues: Variant surface glycoprotein MITAT 1.6 (529 aa).

An N-terminal signal peptide occupies residues 1 to 24 (MAVHRALAAYAISLYVLLPRKSGA). Intrachain disulfides connect Cys39–Cys170 and Cys147–Cys214. An N-linked (GlcNAc...) (high mannose) asparagine glycan is attached at Asn456. A lipid anchor (GPI-anchor amidated aspartate) is attached at Asp506. Residues 507–529 (SSILVTKKFALTVVSAAFVALLF) constitute a propeptide, removed in mature form.

N-glycosylated; glycan is composed of 6 to 9 mannose residues.

The protein resides in the cell membrane. VSG forms a coat on the surface of the parasite. The trypanosome evades the immune response of the host by expressing a series of antigenically distinct VSGs from an estimated 1000 VSG genes. The polypeptide is Variant surface glycoprotein MITAT 1.6 (Trypanosoma brucei brucei).